Reading from the N-terminus, the 209-residue chain is MDEILKYFPNLTDLQIEQFQKLDFLYHNWNEKINVISRKDIDSLYTKHILHSLGIAKVMKFEPGTTVLDVGTGGGFPGIPLAILFPETRFYLIDVIAKKIKVVQGVVDALELKNVKAEQKRAELVKGDFDFIVSRAVTNMPDFVSWIKDKIKKQHKHKLKNGILYLKGGDLSEELKDFPAATLYDLSEIFEDEFFETKKVVHLPLKFKP.

S-adenosyl-L-methionine contacts are provided by residues Gly-71, Phe-76, 122–123, and Arg-135; that span reads AE.

This sequence belongs to the methyltransferase superfamily. RNA methyltransferase RsmG family.

The protein localises to the cytoplasm. Its function is as follows. Specifically methylates the N7 position of a guanine in 16S rRNA. The chain is Ribosomal RNA small subunit methyltransferase G from Flavobacterium johnsoniae (strain ATCC 17061 / DSM 2064 / JCM 8514 / BCRC 14874 / CCUG 350202 / NBRC 14942 / NCIMB 11054 / UW101) (Cytophaga johnsonae).